The following is a 142-amino-acid chain: Alpha-lactalbumin (142 aa).

The signal sequence occupies residues 1-18 (MMSFVSLLLVGILFHATQ). The C-type lysozyme domain maps to 20–142 (EQLTKCEVFR…KLDQWLCEKL (123 aa)). Disulfide bonds link cysteine 25–cysteine 139, cysteine 47–cysteine 130, cysteine 80–cysteine 96, and cysteine 92–cysteine 110. Asparagine 64 and asparagine 93 each carry an N-linked (GlcNAc...) asparagine glycan. Positions 98, 101, 103, 106, and 107 each coordinate Ca(2+).

This sequence belongs to the glycosyl hydrolase 22 family. Lactose synthase (LS) is a heterodimer of a catalytic component, beta1,4-galactosyltransferase (beta4Gal-T1) and a regulatory component, alpha-lactalbumin (LA). Mammary gland specific. Secreted in milk.

Its subcellular location is the secreted. In terms of biological role, regulatory subunit of lactose synthase, changes the substrate specificity of galactosyltransferase in the mammary gland making glucose a good acceptor substrate for this enzyme. This enables LS to synthesize lactose, the major carbohydrate component of milk. In other tissues, galactosyltransferase transfers galactose onto the N-acetylglucosamine of the oligosaccharide chains in glycoproteins. The chain is Alpha-lactalbumin (LALBA) from Bubalus bubalis (Domestic water buffalo).